Here is a 360-residue protein sequence, read N- to C-terminus: Peptide chain release factor 1 (360 aa).

N5-methylglutamine is present on Gln-235.

Belongs to the prokaryotic/mitochondrial release factor family. In terms of processing, methylated by PrmC. Methylation increases the termination efficiency of RF1.

It is found in the cytoplasm. Functionally, peptide chain release factor 1 directs the termination of translation in response to the peptide chain termination codons UAG and UAA. This chain is Peptide chain release factor 1, found in Cupriavidus taiwanensis (strain DSM 17343 / BCRC 17206 / CCUG 44338 / CIP 107171 / LMG 19424 / R1) (Ralstonia taiwanensis (strain LMG 19424)).